The primary structure comprises 272 residues: Putative pyruvate, phosphate dikinase regulatory protein 2 (272 aa).

154–161 (GVSRTSKT) is a binding site for ADP.

This sequence belongs to the pyruvate, phosphate/water dikinase regulatory protein family. PDRP subfamily.

It catalyses the reaction N(tele)-phospho-L-histidyl/L-threonyl-[pyruvate, phosphate dikinase] + ADP = N(tele)-phospho-L-histidyl/O-phospho-L-threonyl-[pyruvate, phosphate dikinase] + AMP + H(+). It carries out the reaction N(tele)-phospho-L-histidyl/O-phospho-L-threonyl-[pyruvate, phosphate dikinase] + phosphate + H(+) = N(tele)-phospho-L-histidyl/L-threonyl-[pyruvate, phosphate dikinase] + diphosphate. Its function is as follows. Bifunctional serine/threonine kinase and phosphorylase involved in the regulation of the pyruvate, phosphate dikinase (PPDK) by catalyzing its phosphorylation/dephosphorylation. The sequence is that of Putative pyruvate, phosphate dikinase regulatory protein 2 from Staphylococcus epidermidis (strain ATCC 35984 / DSM 28319 / BCRC 17069 / CCUG 31568 / BM 3577 / RP62A).